Reading from the N-terminus, the 594-residue chain is Zinc finger protein 467 (594 aa).

Positions 1–86 are disordered; that stretch reads MRETLEALNS…PQKAEPAGSV (86 aa). The tract at residues 1–183 is interaction with STAT3; that stretch reads MRETLEALNS…TLRLHQRLHR (183 aa). Over residues 31–47 the composition is skewed to polar residues; that stretch reads SNAQEKMSSRGESTLHS. Residues 54–64 show a composition bias toward basic and acidic residues; it reads PGQKEGIHTEQ. Residue Lys-97 forms a Glycyl lysine isopeptide (Lys-Gly) (interchain with G-Cter in SUMO2) linkage. 12 C2H2-type zinc fingers span residues 160-182, 188-210, 216-238, 244-266, 272-294, 300-322, 355-377, 430-452, 458-480, 486-508, 514-536, and 542-564; these read YGCE…QRLH, CACP…QRSH, FPCS…LRTH, YPCA…QKTH, FPCT…QRIH, YQCT…QRVH, FACS…QSLH, FFCP…RRVH, FACA…SRAH, FACA…QAVH, HACA…QAIH, and FSCP…QRIH. Positions 313–351 are disordered; the sequence is QHLVRHQRVHDAASRTRSSPDIPVAPHSPTASLTPSPPG. A Glycyl lysine isopeptide (Lys-Gly) (interchain with G-Cter in SUMO2) cross-link involves residue Lys-368.

It belongs to the krueppel C2H2-type zinc-finger protein family. Interacts with STAT3. Enhances STAT3 activity by keeping it in the nucleus.

Its subcellular location is the nucleus. In terms of biological role, transcription factor that promotes adipocyte differentiation and suppresses osteoblast differentiation in the bone marrow. Enhances the osteoclast-supporting ability of stromal cells. Binds with STAT3 the consensus sequence 5'-CTTCTGGGAAGA-3' of the acute phase response element (APRE). Transactivates several promoters including FOS, OSM and PPARG. Recruits a histone deacetylase complex. The protein is Zinc finger protein 467 (Znf467) of Mus musculus (Mouse).